The chain runs to 128 residues: Nucleoside diphosphate kinase B (128 aa).

M1 carries the post-translational modification N-acetylmethionine. 5 residues coordinate ATP: K9, F39, T70, R81, and N91. The Pros-phosphohistidine intermediate role is filled by H94.

This sequence belongs to the NDK family. It depends on Mg(2+) as a cofactor.

It is found in the cytoplasm. The protein localises to the nucleus. Its subcellular location is the cell projection. It localises to the lamellipodium. The protein resides in the ruffle. It carries out the reaction a 2'-deoxyribonucleoside 5'-diphosphate + ATP = a 2'-deoxyribonucleoside 5'-triphosphate + ADP. The catalysed reaction is a ribonucleoside 5'-diphosphate + ATP = a ribonucleoside 5'-triphosphate + ADP. Major role in the synthesis of nucleoside triphosphates other than ATP. The sequence is that of Nucleoside diphosphate kinase B (nme2) from Merluccius bilinearis (Silver hake).